Here is a 150-residue protein sequence, read N- to C-terminus: Dual specificity protein phosphatase 23 (150 aa).

Residues 7–150 form the Tyrosine-protein phosphatase domain; sequence NFSWVLPGRL…AVFQFYQRTK (144 aa). The active-site Phosphocysteine intermediate is the Cys-95.

The protein belongs to the protein-tyrosine phosphatase family. Non-receptor class dual specificity subfamily. As to expression, widely expressed.

The protein localises to the cytoplasm. The protein resides in the cytosol. Its subcellular location is the nucleus. It carries out the reaction O-phospho-L-tyrosyl-[protein] + H2O = L-tyrosyl-[protein] + phosphate. The enzyme catalyses O-phospho-L-seryl-[protein] + H2O = L-seryl-[protein] + phosphate. The catalysed reaction is O-phospho-L-threonyl-[protein] + H2O = L-threonyl-[protein] + phosphate. Its function is as follows. Protein phosphatase that mediates dephosphorylation of proteins phosphorylated on Tyr and Ser/Thr residues. In vitro, it can dephosphorylate p44-ERK1 (MAPK3) but not p54 SAPK-beta (MAPK10) in vitro. Able to enhance activation of JNK and p38 (MAPK14). This chain is Dual specificity protein phosphatase 23 (Dusp23), found in Mus musculus (Mouse).